Reading from the N-terminus, the 267-residue chain is MEERHKCKLCWKSFANGRALGGHMRSHMLIHPLPSQPESYSSSMADPGFVLQDRESETESSKKPSRKRSRLNRRSISSLRHQQSNEEGKSETARAADIKIGVQELSESCTEQEPMSSVSDAATTEEDVALSLMLLSRDKWEKEEEESDEERWKKKRNKWFECETCEKVFKSYQALGGHRASHKKKIAETDQLGSDELKKKKKKSTSSHHECPICAKVFTSGQALGGHKRSHASANNEFTRRSGIIISLIDLNLPAPSEEEEMASSVF.

The C2H2-type 1 zinc finger occupies 5–27; sequence HKCKLCWKSFANGRALGGHMRSH. 2 disordered regions span residues 34 to 99 and 181 to 204; these read PSQP…ADIK and SHKKKIAETDQLGSDELKKKKKKS. Basic and acidic residues predominate over residues 52-62; sequence QDRESETESSK. Over residues 63-73 the composition is skewed to basic residues; that stretch reads KPSRKRSRLNR. Basic and acidic residues predominate over residues 83 to 97; sequence QSNEEGKSETARAAD. C2H2-type zinc fingers lie at residues 160–182 and 209–231; these read FECETCEKVFKSYQALGGHRASH and HECPICAKVFTSGQALGGHKRSH.

It localises to the nucleus. In terms of biological role, probable transcription factor that may be involved in stress responses. The chain is Zinc finger protein ZAT1 (ZAT1) from Arabidopsis thaliana (Mouse-ear cress).